Reading from the N-terminus, the 850-residue chain is Envelope glycoprotein gp160 (850 aa).

A signal peptide spans 1-28 (METQTSWLSLWRWGLMIFGMLMICSARE). At 29-678 (NLWVTVYYGV…ISNWLWYIKI (650 aa)) the chain is on the extracellular side. Residues cysteine 50 and cysteine 70 are joined by a disulfide bond. N-linked (GlcNAc...) asparagine; by host glycosylation is found at asparagine 84, asparagine 126, asparagine 133, asparagine 134, asparagine 139, asparagine 152, asparagine 156, asparagine 184, asparagine 193, asparagine 226, asparagine 230, asparagine 237, asparagine 258, asparagine 272, asparagine 285, asparagine 297, asparagine 327, asparagine 334, and asparagine 349. Intrachain disulfides connect cysteine 115–cysteine 201, cysteine 122–cysteine 192, cysteine 127–cysteine 153, cysteine 214–cysteine 243, and cysteine 224–cysteine 235. The segment at 127–152 (CSDVNSNNSTDSNSSASNNSPEIMKN) is V1. Residues 153–192 (CSFNVTTEIRNKRKQEYALFYRQDVVPINSDNKSYILINC) form a V2 region. Positions 292-325 (CTRPNNNTRKGIHMGPGQVLYATGEIIGDIRKAY) are V3. Cysteine 292 and cysteine 326 are disulfide-bonded. The interval 357-367 (PSGGDIEITTH) is CD4-binding loop. 2 disulfide bridges follow: cysteine 371/cysteine 436 and cysteine 378/cysteine 409. A V4 region spans residues 378–409 (CNTSTLFNSSWDENNIKDTNSTNDNTTITIPC). N-linked (GlcNAc...) asparagine; by host glycans are attached at residues asparagine 379, asparagine 385, asparagine 397, asparagine 402, asparagine 433, asparagine 439, asparagine 453, and asparagine 457. The interval 447-467 (RDGGNRNGSENGTETFRPTGG) is disordered. Residues 453–462 (NGSENGTETF) are compositionally biased toward polar residues. V5 regions lie at residues 453 to 465 (NGSE…FRPT) and 454 to 465 (GSENGTETFRPT). A fusion peptide region spans residues 506–526 (AVGIGAVFLGFLGTAGSTMGA). Residues 568-586 (KQLQARVLAVERYLKDQQL) form an immunosuppression region. An intrachain disulfide couples cysteine 592 to cysteine 598. N-linked (GlcNAc...) asparagine; by host glycosylation is found at asparagine 605, asparagine 610, asparagine 619, asparagine 631, and asparagine 668. The stretch at 627–661 (REINNYTGIIYSLIEEAQNQQETNEKDLLALDKWT) forms a coiled coil. The MPER; binding to GalCer stretch occupies residues 656–677 (ALDKWTNLWNWFNISNWLWYIK). Residues 679 to 699 (FIMIIGGLIGLRIIFAVLAIV) form a helical membrane-spanning segment. Residues 700–850 (NRVRQGYSPL…IRQGLERALL (151 aa)) are Cytoplasmic-facing. The short motif at 706–709 (YSPL) is the YXXL motif; contains endocytosis signal element. Cysteine 758 carries the S-palmitoyl cysteine; by host lipid modification. Positions 849 to 850 (LL) match the Di-leucine internalization motif motif.

This sequence belongs to the HIV-1 env protein family. In terms of assembly, the mature envelope protein (Env) consists of a homotrimer of non-covalently associated gp120-gp41 heterodimers. The resulting complex protrudes from the virus surface as a spike. There seems to be as few as 10 spikes on the average virion. Interacts with host CD4, CCR5 and CXCR4. Gp120 also interacts with the C-type lectins CD209/DC-SIGN and CLEC4M/DC-SIGNR (collectively referred to as DC-SIGN(R)). Gp120 and gp41 interact with GalCer. Gp120 interacts with host ITGA4/ITGB7 complex; on CD4+ T-cells, this interaction results in rapid activation of integrin ITGAL/LFA-1, which facilitates efficient cell-to-cell spreading of HIV-1. Gp120 interacts with cell-associated heparan sulfate; this interaction increases virus infectivity on permissive cells and may be involved in infection of CD4- cells. As to quaternary structure, the mature envelope protein (Env) consists of a homotrimer of non-covalently associated gp120-gp41 heterodimers. The resulting complex protrudes from the virus surface as a spike. There seems to be as few as 10 spikes on the average virion. Highly glycosylated by host. The high number of glycan on the protein is reffered to as 'glycan shield' because it contributes to hide protein sequence from adaptive immune system. In terms of processing, palmitoylation of the transmembrane protein and of Env polyprotein (prior to its proteolytic cleavage) is essential for their association with host cell membrane lipid rafts. Palmitoylation is therefore required for envelope trafficking to classical lipid rafts, but not for viral replication. Post-translationally, specific enzymatic cleavages in vivo yield mature proteins. Envelope glycoproteins are synthesized as an inactive precursor that is heavily N-glycosylated and processed likely by host cell furin in the Golgi to yield the mature SU and TM proteins. The cleavage site between SU and TM requires the minimal sequence [KR]-X-[KR]-R. About 2 of the 9 disulfide bonds of gp41 are reduced by P4HB/PDI, following binding to CD4 receptor.

The protein resides in the virion membrane. It localises to the host cell membrane. The protein localises to the host endosome membrane. In terms of biological role, oligomerizes in the host endoplasmic reticulum into predominantly trimers. In a second time, gp160 transits in the host Golgi, where glycosylation is completed. The precursor is then proteolytically cleaved in the trans-Golgi and thereby activated by cellular furin or furin-like proteases to produce gp120 and gp41. Functionally, attaches the virus to the host lymphoid cell by binding to the primary receptor CD4. This interaction induces a structural rearrangement creating a high affinity binding site for a chemokine coreceptor like CXCR4 and/or CCR5. Acts as a ligand for CD209/DC-SIGN and CLEC4M/DC-SIGNR, which are respectively found on dendritic cells (DCs), and on endothelial cells of liver sinusoids and lymph node sinuses. These interactions allow capture of viral particles at mucosal surfaces by these cells and subsequent transmission to permissive cells. HIV subverts the migration properties of dendritic cells to gain access to CD4+ T-cells in lymph nodes. Virus transmission to permissive T-cells occurs either in trans (without DCs infection, through viral capture and transmission), or in cis (following DCs productive infection, through the usual CD4-gp120 interaction), thereby inducing a robust infection. In trans infection, bound virions remain infectious over days and it is proposed that they are not degraded, but protected in non-lysosomal acidic organelles within the DCs close to the cell membrane thus contributing to the viral infectious potential during DCs' migration from the periphery to the lymphoid tissues. On arrival at lymphoid tissues, intact virions recycle back to DCs' cell surface allowing virus transmission to CD4+ T-cells. Its function is as follows. Acts as a class I viral fusion protein. Under the current model, the protein has at least 3 conformational states: pre-fusion native state, pre-hairpin intermediate state, and post-fusion hairpin state. During fusion of viral and target intracellular membranes, the coiled coil regions (heptad repeats) assume a trimer-of-hairpins structure, positioning the fusion peptide in close proximity to the C-terminal region of the ectodomain. The formation of this structure appears to drive apposition and subsequent fusion of viral and target cell membranes. Complete fusion occurs in host cell endosomes and is dynamin-dependent, however some lipid transfer might occur at the plasma membrane. The virus undergoes clathrin-dependent internalization long before endosomal fusion, thus minimizing the surface exposure of conserved viral epitopes during fusion and reducing the efficacy of inhibitors targeting these epitopes. Membranes fusion leads to delivery of the nucleocapsid into the cytoplasm. This Human immunodeficiency virus type 1 group M subtype J (isolate SE9173) (HIV-1) protein is Envelope glycoprotein gp160.